Consider the following 267-residue polypeptide: Expansin-B10 (267 aa).

An N-terminal signal peptide occupies residues 1–22 (MASSCLLLACVVAAAMVSAVSC). Asn32 carries an N-linked (GlcNAc...) asparagine glycan. The region spanning 61–167 (GGACGYKDID…RRVRCKYPGE (107 aa)) is the Expansin-like EG45 domain. Disulfide bonds link Cys64-Cys92, Cys95-Cys162, and Cys100-Cys106. The Expansin-like CBD domain occupies 181–262 (NYFAVLVKYV…NWKANALYKS (82 aa)). Asn213 carries an N-linked (GlcNAc...) asparagine glycan.

This sequence belongs to the expansin family. Expansin B subfamily.

It is found in the secreted. It localises to the cell wall. The protein localises to the membrane. Its function is as follows. May cause loosening and extension of plant cell walls by disrupting non-covalent bonding between cellulose microfibrils and matrix glucans. No enzymatic activity has been found. May be required for rapid internodal elongation in deepwater rice during submergence. This is Expansin-B10 (EXPB10) from Oryza sativa subsp. japonica (Rice).